Reading from the N-terminus, the 300-residue chain is Vetispiradiene synthase 2 (300 aa).

D54, D58, D197, T201, and E205 together coordinate Mg(2+). The DDXXD motif motif lies at D54 to D58.

The protein belongs to the terpene synthase family. Tpsa subfamily. The cofactor is Mg(2+).

It is found in the cytoplasm. It catalyses the reaction (2E,6E)-farnesyl diphosphate = (-)-vetispiradiene + diphosphate. The protein operates within secondary metabolite biosynthesis; terpenoid biosynthesis. Its function is as follows. Sesquiterpene synthase that catalyzes the formation of vetispiradiene from trans,trans-farnesyl diphosphate. The initial internal cyclization produces the monocyclic intermediate germacrene A. The protein is Vetispiradiene synthase 2 of Hyoscyamus muticus (Egyptian henbane).